The chain runs to 301 residues: Fructokinase (301 aa).

Zn(2+)-binding residues include His-165, Cys-181, His-184, and Cys-187.

It belongs to the ROK (NagC/XylR) family. The cofactor is Mg(2+).

It carries out the reaction D-fructose + ATP = D-fructose 6-phosphate + ADP + H(+). With respect to regulation, inhibition by zinc ions. The chain is Fructokinase (frk) from Zymomonas mobilis subsp. mobilis (strain ATCC 31821 / ZM4 / CP4).